Here is a 544-residue protein sequence, read N- to C-terminus: MNQSKKILRTVYLSLFLIGLFMLINDIFSSIMLSFKSSDKEVQFDLNKSFDDNEIFLSKSNGFDLINKSQNIVVETEIYFATFSTFRGNLVSLKLKNHLNLEKDPTDLINVDYKNETFFDVSLDYLVEDLFLYKKIDNLNHEFKAYFKNHGKIYEYVKKYTFSEKNEYLMKFTVIVNSLNDYDLFDIDSYKIVFSSEIERLSDKAKLQYNNYLSQIIYYDNKLKYGKDGLSINNPRWIGSSTKYFEVLISRENMEVEFKKERGVLKSFIVNNVGNKKNISDEFFIYAGPKDNRYLDIFDKSGDNTFGLSDIAFGMSVEKSLWYLIQVPMQMVMQVFYDVIPNWGLSIIFLTIVVRILIFPLTFKGFRATAELSKLQPKMKELQVKFKHDPKKLNEEMGRLYKEEGVNPLGGCFPVILQLPIFFALYSLVNNLFLLRGASFIPGWIDDLSIGDSVYNFGYRLYFVSWTDIRILPFIMMFTQLGSTIVSSNLDLKNLGAQQKFLYFGMPIMFFFILYNMPSGLLIYWITTNIFTILQQYYIKMHLS.

Helical transmembrane passes span 15-35 (LFLI…MLSF), 321-341 (LWYL…DVIP), 343-363 (WGLS…PLTF), 409-429 (LGGC…YSLV), and 506-526 (MPIM…IYWI).

Belongs to the OXA1/ALB3/YidC family. Type 1 subfamily. As to quaternary structure, interacts with the Sec translocase complex via SecD. Specifically interacts with transmembrane segments of nascent integral membrane proteins during membrane integration.

The protein localises to the cell inner membrane. In terms of biological role, required for the insertion and/or proper folding and/or complex formation of integral membrane proteins into the membrane. Involved in integration of membrane proteins that insert both dependently and independently of the Sec translocase complex, as well as at least some lipoproteins. Aids folding of multispanning membrane proteins. In Borrelia garinii subsp. bavariensis (strain ATCC BAA-2496 / DSM 23469 / PBi) (Borreliella bavariensis), this protein is Membrane protein insertase YidC.